Reading from the N-terminus, the 75-residue chain is Metallothionein-like protein 1B (75 aa).

Belongs to the metallothionein superfamily. Type 15 family.

In terms of biological role, metallothioneins have a high content of cysteine residues that bind various heavy metals. This is Metallothionein-like protein 1B (MT1B) from Vicia faba (Broad bean).